An 82-amino-acid chain; its full sequence is Large ribosomal subunit protein bL27 (82 aa).

The tract at residues 1–54 (MAHKKGQGASRNGRDSESKRLGMKVGAGQRVSTGSILVRQRGTKWHPSQNVGRG) is disordered.

The protein belongs to the bacterial ribosomal protein bL27 family.

The chain is Large ribosomal subunit protein bL27 from Chlamydia caviae (strain ATCC VR-813 / DSM 19441 / 03DC25 / GPIC) (Chlamydophila caviae).